A 118-amino-acid chain; its full sequence is Large ribosomal subunit protein bL20 (118 aa).

The protein belongs to the bacterial ribosomal protein bL20 family.

In terms of biological role, binds directly to 23S ribosomal RNA and is necessary for the in vitro assembly process of the 50S ribosomal subunit. It is not involved in the protein synthesizing functions of that subunit. This Staphylococcus aureus (strain Mu3 / ATCC 700698) protein is Large ribosomal subunit protein bL20.